The chain runs to 203 residues: MKLLNSLVLLAALCAITANGKIVEDTPDPSTVYNLFQLSSSDGGCDPAGTHSPDANVNVSVDKCRNVCNKNIKISKGTSTNQFTFQTYNDNSCSQATSDQALSFTCSDNVKKQLGTSIYSVICSTGSDSTNPTSTPSTTPSATPTVTPSTTPTVTPTVTPSTTPTVAPTVPPTTPPSTTTGSGSTVVASFGLIVSILLASLAL.

A signal peptide spans 1 to 20; sequence MKLLNSLVLLAALCAITANG. N-linked (GlcNAc...) asparagine glycosylation occurs at asparagine 58. Positions 127-168 are enriched in low complexity; it reads SDSTNPTSTPSTTPSATPTVTPSTTPTVTPTVTPSTTPTVAP. Positions 127–183 are disordered; that stretch reads SDSTNPTSTPSTTPSATPTVTPSTTPTVTPTVTPSTTPTVAPTVPPTTPPSTTTGSG. Residue serine 182 is the site of GPI-like-anchor amidated serine attachment. Positions 183–203 are cleaved as a propeptide — removed in mature form; it reads GSTVVASFGLIVSILLASLAL.

This sequence belongs to the ponticulin family. Post-translationally, the GPI-like-anchor contains a phosphoceramide group, rather than a phosphatidyl group.

The protein localises to the cell membrane. Its function is as follows. Binds F-actin and nucleates actin assembly. This is Ponticulin-like protein H (ponH) from Dictyostelium discoideum (Social amoeba).